Consider the following 313-residue polypeptide: Protoheme IX farnesyltransferase (313 aa).

8 helical membrane-spanning segments follow: residues 34-54 (VIEL…RGTV), 56-76 (PLLI…ANTL), 105-125 (HALI…WWTT), 128-148 (LSAH…TLVL), 152-172 (TSQN…IGWS), 173-193 (AVTG…FFWT), 243-263 (LALA…TWFL), and 291-311 (YLAV…PTLF).

This sequence belongs to the UbiA prenyltransferase family. Protoheme IX farnesyltransferase subfamily.

Its subcellular location is the cell membrane. It carries out the reaction heme b + (2E,6E)-farnesyl diphosphate + H2O = Fe(II)-heme o + diphosphate. It participates in porphyrin-containing compound metabolism; heme O biosynthesis; heme O from protoheme: step 1/1. Its function is as follows. Converts heme B (protoheme IX) to heme O by substitution of the vinyl group on carbon 2 of heme B porphyrin ring with a hydroxyethyl farnesyl side group. In Mycolicibacterium vanbaalenii (strain DSM 7251 / JCM 13017 / BCRC 16820 / KCTC 9966 / NRRL B-24157 / PYR-1) (Mycobacterium vanbaalenii), this protein is Protoheme IX farnesyltransferase.